The primary structure comprises 210 residues: Chorismate pyruvate-lyase (210 aa).

The protein belongs to the chorismate pyruvate-lyase type 2 family.

The enzyme catalyses chorismate = 4-hydroxybenzoate + pyruvate. Its function is as follows. Removes the pyruvyl group from chorismate to provide 4-hydroxybenzoate (4HB). Involved in the synthesis of glycosylated p-hydroxybenzoic acid methyl esters (p-HBADs) and phenolic glycolipids (PGL) that play important roles in the pathogenesis of mycobacterial infections. This chain is Chorismate pyruvate-lyase, found in Mycobacterium leprae (strain TN).